We begin with the raw amino-acid sequence, 495 residues long: Tyrosine 3-monooxygenase (495 aa).

Ser19 carries the post-translational modification Phosphoserine; by CaMK2. A Phosphoserine modification is found at Ser31. Position 40 is a phosphoserine; by CaMK2 and PKA (Ser40). Basic and acidic residues predominate over residues 41-53 (LIEDARKEREKAE). The interval 41 to 65 (LIEDARKEREKAEAASAASSEPGDL) is disordered. Positions 328, 333, and 373 each coordinate Fe cation. At Ser469 the chain carries Phosphoserine.

It belongs to the biopterin-dependent aromatic amino acid hydroxylase family. Homotetramer. Interacts (when phosphorylated at Ser-19) with YWHAG; one YWHAG dimer bounds to one TH tetramer this interaction may influence the phosphorylation and dephosphorylation of other sites. The cofactor is Fe(2+). Phosphorylated on Ser-19, Ser-31 and Ser-40 by several protein kinases with different site specificities. Phosphorylation at Ser-31 and Ser-40 leads to an increase of TH activity. Phosphorylation at Ser-40 activates the enzyme and also counteracts the feedback inhibition of TH by catecholamines. Phosphorylation of Ser-19 and Ser-31 triggers the proteasomal degradation of TH through the ubiquitin-proteasome pathway. Phosphorylation at Ser-31 facilitates transport of TH from the soma to the nerve terminals via the microtubule network. Phosphorylation at Ser-19 induces the high-affinity binding to the 14-3-3 protein YWHAG; this interaction may influence the phosphorylation and dephosphorylation of other sites. Ser-19 increases the phosphorylation at Ser-40 in a hierarchical manner, leading to increased activity.

The protein resides in the cytoplasm. It localises to the perinuclear region. The protein localises to the nucleus. Its subcellular location is the cell projection. It is found in the axon. The protein resides in the cytoplasmic vesicle. It localises to the secretory vesicle. The protein localises to the synaptic vesicle. It catalyses the reaction (6R)-L-erythro-5,6,7,8-tetrahydrobiopterin + L-tyrosine + O2 = (4aS,6R)-4a-hydroxy-L-erythro-5,6,7,8-tetrahydrobiopterin + L-dopa. The protein operates within catecholamine biosynthesis; dopamine biosynthesis; dopamine from L-tyrosine: step 1/2. With respect to regulation, inhibited in feedback fashion by the catecholamine neurotransmitters, especially by dopamine in competition with tetrahydrobiopterin. Phosphorylation of several Ser/Thr residues in the N-terminus regulates the catalytic activity. Ser-31 and Ser-40 are readily phosphorylated to activate the catalytic activity. A Cysteine modification induced by N-ethylmaleimide (NEM), inhibits tyrosine 3-monooxygenase activity through the modification of the Cys-174. Functionally, catalyzes the conversion of L-tyrosine to L-dihydroxyphenylalanine (L-Dopa), the rate-limiting step in the biosynthesis of cathecolamines, dopamine, noradrenaline, and adrenaline. Uses tetrahydrobiopterin and molecular oxygen to convert tyrosine to L-Dopa. In addition to tyrosine, is able to catalyze the hydroxylation of phenylalanine and tryptophan with lower specificity. Positively regulates the regression of retinal hyaloid vessels during postnatal development. The sequence is that of Tyrosine 3-monooxygenase (TH) from Canis lupus familiaris (Dog).